The following is a 97-amino-acid chain: Pyrin domain-containing protein 2 (97 aa).

A Pyrin domain is found at 1 to 94 (MASSAELDFN…SGRADEHCVM (94 aa)).

Interacts with PYCARD/ASC (via pyrin domain). Interacts with NLRP2 (via pyrin domain). Predominantly expressed in peripheral blood. Weakly expressed in testis.

The protein localises to the cytoplasm. Its subcellular location is the nucleus. Functionally, may play a role in innate immunity by disrupting the interaction between PYCARD and NLRP3, thereby regulating the NLRP3 inflammasome. May also inhibit NF-kappa-B signaling distally by affecting the nuclear accumulation of RELA. This chain is Pyrin domain-containing protein 2, found in Homo sapiens (Human).